The primary structure comprises 373 residues: Chorismate synthase (373 aa).

Arginine 46 is a binding site for NADP(+). FMN contacts are provided by residues 123-125 (RSS), 251-252 (NA), glycine 295, 310-314 (KPTPS), and arginine 337.

Belongs to the chorismate synthase family. The cofactor is FMNH2.

It carries out the reaction 5-O-(1-carboxyvinyl)-3-phosphoshikimate = chorismate + phosphate. It functions in the pathway metabolic intermediate biosynthesis; chorismate biosynthesis; chorismate from D-erythrose 4-phosphate and phosphoenolpyruvate: step 7/7. Functionally, catalyzes the anti-1,4-elimination of the C-3 phosphate and the C-6 proR hydrogen from 5-enolpyruvylshikimate-3-phosphate (EPSP) to yield chorismate, which is the branch point compound that serves as the starting substrate for the three terminal pathways of aromatic amino acid biosynthesis. This reaction introduces a second double bond into the aromatic ring system. The chain is Chorismate synthase from Methanococcus maripaludis (strain C5 / ATCC BAA-1333).